We begin with the raw amino-acid sequence, 651 residues long: MSSVVHVTLPDGSVREYPQGITIAEAVAQIGPRLAKAALAAKVDGRLVDLSARLEKDCTLQVLTFKDEEGREVFRHTSTHIMAQAVKRLFPEAKLTVGPPLENSFYYDFDLPRPLTPEDLEKIEAEMAKIVEADYPIVRQEVDREEAKRFFAERGEDYKVLLVDKIPEDEVVSIYTQGEFTDLCVGPHLPSTGRVKAFKLLSVAGAYWEGNQANKQLQRVYGTSFESKKDLEDYLFRLEEARRRDHRRLGPELGLYRFEEVAPGFAFWLDKGYRLYRELENWSRKLQEARGYEEVSTPWIVSSKLYETSGHWQHYRQNMFEIRAEDQDFATKPMNCPCHCVLYKSQIRSYRDLPLKIAEYGPLSRFEASGTLHGLLRVRGFHQDDAHLFVRPDQIEEQIREVIGLVDTIYGTLGLEYEIKLSTRPEDFMGDIELWNEAEAALARALDGMGRSYKLNPGDGAFYGPKLDFDVTDALGRKWQCATVQLDFQLPIKFDLTYIGEDGKEHRPVMIHRAIMGTLERFIGILTEHYAGNFPLWMAPVQARVLPITDRHHAYAGEVVAKLQEAGLRVEGDYRNEKVGYKIREAELLKIPFILVVGDKEAEAGAVAVRRRGMKDLGPMPLADFLALAQSEIASKAMDEACRKAASGTRD.

One can recognise a TGS domain in the interval 1–64 (MSSVVHVTLP…EKDCTLQVLT (64 aa)). The segment at 245–535 (DHRRLGPELG…LTEHYAGNFP (291 aa)) is catalytic. The Zn(2+) site is built by cysteine 336, histidine 387, and histidine 512.

The protein belongs to the class-II aminoacyl-tRNA synthetase family. In terms of assembly, homodimer. Requires Zn(2+) as cofactor.

The protein localises to the cytoplasm. The enzyme catalyses tRNA(Thr) + L-threonine + ATP = L-threonyl-tRNA(Thr) + AMP + diphosphate + H(+). Functionally, catalyzes the attachment of threonine to tRNA(Thr) in a two-step reaction: L-threonine is first activated by ATP to form Thr-AMP and then transferred to the acceptor end of tRNA(Thr). Also edits incorrectly charged L-seryl-tRNA(Thr). This is Threonine--tRNA ligase from Symbiobacterium thermophilum (strain DSM 24528 / JCM 14929 / IAM 14863 / T).